A 406-amino-acid polypeptide reads, in one-letter code: DNA primase DnaG (406 aa).

The region spanning 167–253 (DAVVIVEGRA…CVEDLSRRTV (87 aa)) is the Toprim domain. Positions 173, 215, and 217 each coordinate Mg(2+). The interval 259-309 (NKTPASAAAPIATTQSETAATDGSATPAPTPEPAPDTAPSPDSDGDDTEAA) is disordered. Over residues 261-272 (TPASAAAPIATT) the composition is skewed to low complexity. Positions 286-296 (APTPEPAPDTA) are enriched in pro residues.

The protein belongs to the archaeal DnaG primase family. As to quaternary structure, forms a ternary complex with MCM helicase and DNA. It depends on Mg(2+) as a cofactor.

It catalyses the reaction ssDNA + n NTP = ssDNA/pppN(pN)n-1 hybrid + (n-1) diphosphate.. Functionally, RNA polymerase that catalyzes the synthesis of short RNA molecules used as primers for DNA polymerase during DNA replication. The sequence is that of DNA primase DnaG from Halobacterium salinarum (strain ATCC 29341 / DSM 671 / R1).